A 478-amino-acid polypeptide reads, in one-letter code: Oxidative stress-induced growth inhibitor 1 (478 aa).

Ser12 carries the phosphoserine modification.

This sequence belongs to the OKL38 family. It depends on NADPH as a cofactor.

The protein resides in the midbody. Its function is as follows. Monooxygenase catalytic activity. Involved in regulation of cytokinesis; promotes RHOA activity, probably acting locally at the midbody in late cytokinesis. Monooxygenase activity is involved in stabilizing transient structures between daughter cells, termed intercellular bridges, before abscission. Regulates differentiation and proliferation through the regulation of cell death. In Mus musculus (Mouse), this protein is Oxidative stress-induced growth inhibitor 1.